The chain runs to 1248 residues: MEFIPTQTFYNRRYQPRPWTPRPTIQVIRPRPRPQRQAGQLAQLISAVNKLTMRAVPQQKPRRNRKNKKQKQKQQAPQNNTNQKKQPPKKKPAQKKKKPGRRERMCMKIENDCIFEVKHEGKVTGYACLVGDKVMKPAHVKGTIDNADLAKLAFKRSSKYDLECAQIPVHMKSDASKFTHEKPEGYYNWHHGAVQYSGGRFTIPTGAGKPGDSGRPIFDNKGRVVAIVLGGANEGARTALSVVTWNKDIVTKITPEGAEEWSLAIPVMCLLANTTFPCSQPPCIPCCYEKEPEETLRMLEDNVMRPGYYQLLQASLTCSPHRQRRSTKDNFNVYKATRPYLAHCPDCGEGHSCHSPVALERIRNEATDGTLKIQVSLQIGIGTDDSHDWTKLRYMDNHIPADAGRAGLFVRTSAPCTITGTMGHFILARCPKGETLTVGFTDSRKISHSCTHPFHHDPPVIGREKFHSRPQHGKELPCSTYVQSNAATAEEIEVHMPPDTPDRTLLSQQSGNVKITVNGRTVRYKCNCGGSNEGLITTDKVINNCKVDQCHAAVTNHKKWQYNSPLVPRNAELGDRKGKIHIPFPLANVTCMVPKARNPTVTYGKNQVIMLLYPDHPTLLSYRSMGEEPNYQEEWVTHKKEVVLTVPTEGLEVTWGNNEPYKYWPQLSANGTAHGHPHEIILYYYELYPTMTVVVVSVASFILLSMVGMAVGMCMCARRRCITPYELTPGATVPFLLSLICCIRTAKAATYQEAAVYLWNEQQPLFWLQALIPLAALIVLCNCLRLLPCCCKTLAFLAVMSIGAHTVSAYEHVTVIPNTVGVPYKTLVNRPGYSPMVLEMELLSVTLEPTLSLDYITCEYKTVIPSPYVKCCGTAECKDKNLPDYSCKVFTGVYPFMWGGAYCFCDAENTQLSEAHVEKSESCKTEFASAYRAHTASASAKLRVLYQGNNITVTAYANGDHAVTVKDAKFIVGPMSSAWTPFDNKIVVYKGDVYNMDYPPFGAGRPGQFGDIQSRTPESKDVYANTQLVLQRPAAGTVHVPYSQAPSGFKYWLKERGASLQHTAPFGCQIATNPVRAMNCAVGNMPISIDIPDAAFTRVVDAPSLTDMSCEVPACTHSSDFGGVAIIKYAVSKKGKCAVHSMTNAVTIREAEIEVEGNSQLQISFSTALASAEFRVQVCSTQVHCAAECHPPKDHIVNYPASHTTLGVQDISATAMSWVQKITGGVGLVVAVAALILIVVLCVSFSRH.

Residues 1 to 10 show a composition bias toward polar residues; the sequence is MEFIPTQTFY. The disordered stretch occupies residues 1-104; sequence MEFIPTQTFY…KKKKPGRRER (104 aa). Over residues 22–44 the composition is skewed to low complexity; the sequence is RPTIQVIRPRPRPQRQAGQLAQL. Residues 36–68 form a host transcription inhibition region; that stretch reads RQAGQLAQLISAVNKLTMRAVPQQKPRRNRKNK. Over residues 60-72 the composition is skewed to basic residues; that stretch reads KPRRNRKNKKQKQ. The Nuclear localization signal motif lies at 61-99; sequence PRRNRKNKKQKQKQQAPQNNTNQKKQPPKKKPAQKKKKP. Positions 73–85 are enriched in low complexity; the sequence is KQQAPQNNTNQKK. The binding to the viral RNA stretch occupies residues 84–114; the sequence is KKQPPKKKPAQKKKKPGRRERMCMKIENDCI. Basic residues predominate over residues 86–101; sequence QPPKKKPAQKKKKPGR. Positions 99 to 113 are ribosome-binding; the sequence is PGRRERMCMKIENDC. Cysteines 113 and 128 form a disulfide. The region spanning 113–261 is the Peptidase S3 domain; sequence CIFEVKHEGK…KITPEGAEEW (149 aa). H139 acts as the Charge relay system in catalysis. The short motif at 144-154 is the Nuclear export signal element; it reads IDNADLAKLAF. An interaction with spike glycoprotein E2 region spans residues 155–160; sequence KRSSKY. The active-site Charge relay system is D161. A dimerization of the capsid protein region spans residues 183 to 193; that stretch reads PEGYYNWHHGA. S213 (charge relay system) is an active-site residue. A dimerization of the capsid protein region spans residues 219 to 223; it reads DNKGR. A functions as an uncleaved signal peptide for the precursor of protein E3/E2 region spans residues 262-274; it reads SLAIPVMCLLANT. Topologically, residues 262 to 692 are extracellular; the sequence is SLAIPVMCLL…YYYELYPTMT (431 aa). 9 disulfides stabilise this stretch: C269–C278, C283–C287, C286–C318, C344–C450, C347–C353, C416–C430, C478–C591, C526–C550, and C528–C545. An N-linked (GlcNAc...) asparagine; by host glycan is attached at N273. Interaction with host Mxra8 receptor stretches follow at residues 351 to 354 and 387 to 389; these read HSCH and HDW. 2 interaction with host Mxra8 receptor regions span residues 509–512 and 541–547; these read QSGN and VINNCKV. N-linked (GlcNAc...) asparagine; by host glycosylation is found at N588 and N670. Residues 693–713 traverse the membrane as a helical segment; sequence VVVVSVASFILLSMVGMAVGM. Topologically, residues 714-748 are cytoplasmic; the sequence is CMCARRRCITPYELTPGATVPFLLSLICCIRTAKA. An interaction with the capsid protein region spans residues 716–720; that stretch reads CARRR. Residues C721, C741, and C742 are each lipidated (S-palmitoyl cysteine; by host). The interval 721–741 is transient transmembrane before p62-6K protein processing; that stretch reads CITPYELTPGATVPFLLSLIC. A disulfide bond links C721 and C742. The Extracellular segment spans residues 749-763; that stretch reads ATYQEAAVYLWNEQQ. A helical transmembrane segment spans residues 764–784; the sequence is PLFWLQALIPLAALIVLCNCL. Over 785 to 795 the chain is Cytoplasmic; that stretch reads RLLPCCCKTLA. The helical transmembrane segment at 796–816 threads the bilayer; the sequence is FLAVMSIGAHTVSAYEHVTVI. Residues 817 to 1224 lie on the Extracellular side of the membrane; the sequence is PNTVGVPYKT…AMSWVQKITG (408 aa). Intrachain disulfides connect C858–C923, C871–C903, C872–C905, and C877–C887. The tract at residues 893–910 is E1 fusion peptide loop; sequence VYPFMWGGAYCFCDAENT. N-linked (GlcNAc...) asparagine; by host glycosylation is found at N950 and N1079. Cystine bridges form between C1068-C1080, C1110-C1185, C1115-C1189, and C1137-C1179. Residues 1225 to 1245 form a helical membrane-spanning segment; it reads GVGLVVAVAALILIVVLCVSF. C1242 is lipidated: S-palmitoyl cysteine; by host. C1242 is lipidated: S-stearoyl cysteine; by host. The Cytoplasmic portion of the chain corresponds to 1246-1248; sequence SRH.

Belongs to the alphavirus structural polyprotein family. Homodimer. Homomultimer. Interacts with host karyopherin KPNA4; this interaction allows the nuclear import of the viral capsid protein. Interacts with spike glycoprotein E2. Interacts with host IRAK1; the interaction leads to inhibition of IRAK1-dependent signaling. In terms of assembly, the precursor of protein E3/E2 and E1 form a heterodimer shortly after synthesis. As to quaternary structure, interacts with spike glycoprotein E2. The precursor of protein E3/E2 and E1 form a heterodimer shortly after synthesis. Processing of the precursor of protein E3/E2 into E2 and E3 results in a heterodimer of the spike glycoproteins E2 and E1. Spike at virion surface are constituted of three E2-E1 heterodimers. After target cell attachment and endocytosis, E1 changes conformation to form homotrimers. Interacts with 6K protein. Interacts with host MXRA8; this interaction mediates virus entry. The interaction involves 2 adjacent E2-E1 heterodimers. Interacts with spike glycoprotein E1. Processing of the precursor of protein E3/E2 into E2 and E3 results in a heterodimer of the spike glycoproteins E2 and E1. Spike at virion surface are constituted of a trimer of E2-E1 heterodimers. Interacts with 6K protein. Interacts with host MXRA8; this interaction mediates virus entry. The interaction involves 2 adjacent E2-E1 heterodimers. In terms of assembly, oligomer. Interacts with spike glycoprotein E1. Interacts with spike glycoprotein E2. In terms of processing, specific enzymatic cleavages in vivo yield mature proteins. Capsid protein is auto-cleaved during polyprotein translation, unmasking a signal peptide at the N-terminus of the precursor of E3/E2. The remaining polyprotein is then targeted to the host endoplasmic reticulum, where host signal peptidase cleaves it into pE2, 6K and E1 proteins. pE2 is further processed to mature E3 and E2 by host furin in trans-Golgi vesicle. Post-translationally, palmitoylated via thioester bonds. These palmitoylations may induce disruption of the C-terminus transmembrane. This would result in the reorientation of E2 C-terminus from lumenal to cytoplasmic side. N-glycosylated. In terms of processing, palmitoylated via thioester bonds.

The protein resides in the virion. The protein localises to the host cytoplasm. It is found in the host cell membrane. It localises to the host nucleus. Its subcellular location is the virion membrane. The protein resides in the host Golgi apparatus. The protein localises to the host trans-Golgi network. It is found in the host endoplasmic reticulum. It carries out the reaction Autocatalytic release of the core protein from the N-terminus of the togavirus structural polyprotein by hydrolysis of a -Trp-|-Ser- bond.. Its function is as follows. Forms an icosahedral capsid with a T=4 symmetry composed of 240 copies of the capsid protein surrounded by a lipid membrane through which penetrate 80 spikes composed of trimers of E1-E2 heterodimers. The capsid protein binds to the viral RNA genome at a site adjacent to a ribosome binding site for viral genome translation following genome release. Possesses a protease activity that results in its autocatalytic cleavage from the nascent structural protein. Following its self-cleavage, the capsid protein transiently associates with ribosomes, and within several minutes the protein binds to viral RNA and rapidly assembles into icosahedric core particles. The resulting nucleocapsid eventually associates with the cytoplasmic domain of the spike glycoprotein E2 at the cell membrane, leading to budding and formation of mature virions. In case of infection, new virions attach to target cells and after clathrin-mediated endocytosis their membrane fuses with the host endosomal membrane. This leads to the release of the nucleocapsid into the cytoplasm, followed by an uncoating event necessary for the genomic RNA to become accessible. The uncoating might be triggered by the interaction of capsid proteins with ribosomes. Binding of ribosomes would release the genomic RNA since the same region is genomic RNA-binding and ribosome-binding. Specifically inhibits interleukin-1 receptor-associated kinase 1/IRAK1-dependent signaling during viral entry, representing a means by which the alphaviruses may evade innate immune detection and activation prior to viral gene expression. Degrades host cyclic GMP-AMP synthase (CGAS) thereby inhibiting the cGAS-STING pathway. Functionally, provides the signal sequence for the translocation of the precursor of protein E3/E2 to the host endoplasmic reticulum. Furin-cleaved E3 remains associated with spike glycoprotein E1 and mediates pH protection of the latter during the transport via the secretory pathway. After virion release from the host cell, the assembly protein E3 is gradually released in the extracellular space. In terms of biological role, plays a role in viral attachment to target host cell, by binding to the cell receptor MXRA8. Synthesized as a p62 precursor which is processed by furin at the cell membrane just before virion budding, giving rise to E2-E1 heterodimer. The p62-E1 heterodimer is stable, whereas E2-E1 is unstable and dissociate at low pH. p62 is processed at the last step, presumably to avoid E1 fusion activation before its final export to cell surface. E2 C-terminus contains a transitory transmembrane that would be disrupted by palmitoylation, resulting in reorientation of the C-terminal tail from lumenal to cytoplasmic side. This step is critical since E2 C-terminus is involved in budding by interacting with capsid proteins. This release of E2 C-terminus in cytoplasm occurs lately in protein export, and precludes premature assembly of particles at the endoplasmic reticulum membrane. Acts as a viroporin that participates in virus glycoprotein processing and transport to the plasma membrane, cell permeabilization and budding of viral particles. Disrupts the calcium homeostasis of the cell, probably at the endoplasmic reticulum level. This leads to cytoplasmic calcium elevation. Because of its lipophilic properties, the 6K protein is postulated to influence the selection of lipids that interact with the transmembrane domains of the glycoproteins, which, in turn, affects the deformability of the bilayer required for the extreme curvature that occurs as budding proceeds. Present in low amount in virions, about 3% compared to viral glycoproteins. Its function is as follows. Class II viral fusion protein. Fusion activity is inactive as long as E1 is bound to E2 in mature virion. After virus attachment to target cell and endocytosis, acidification of the endosome induce dissociation of E1/E2 heterodimer and concomitant trimerization of the E1 subunits. This E1 trimer is fusion active, and promotes release of viral nucleocapsid in cytoplasm after endosome and viral membrane fusion. Efficient fusion requires the presence of cholesterol and sphingolipid in the target membrane. In Chikungunya virus (strain S27-African prototype) (CHIKV), this protein is Structural polyprotein.